We begin with the raw amino-acid sequence, 228 residues long: Putative N-acetylmannosamine-6-phosphate 2-epimerase (228 aa).

The protein belongs to the NanE family.

The enzyme catalyses an N-acyl-D-glucosamine 6-phosphate = an N-acyl-D-mannosamine 6-phosphate. It functions in the pathway amino-sugar metabolism; N-acetylneuraminate degradation; D-fructose 6-phosphate from N-acetylneuraminate: step 3/5. Functionally, converts N-acetylmannosamine-6-phosphate (ManNAc-6-P) to N-acetylglucosamine-6-phosphate (GlcNAc-6-P). This Lactiplantibacillus plantarum (strain ATCC BAA-793 / NCIMB 8826 / WCFS1) (Lactobacillus plantarum) protein is Putative N-acetylmannosamine-6-phosphate 2-epimerase.